The sequence spans 79 residues: ATP synthase subunit c (79 aa).

The next 2 membrane-spanning stretches (helical) occupy residues 11–31 (IAVA…IGIL) and 53–73 (FFVV…LGLY).

The protein belongs to the ATPase C chain family. As to quaternary structure, F-type ATPases have 2 components, F(1) - the catalytic core - and F(0) - the membrane proton channel. F(1) has five subunits: alpha(3), beta(3), gamma(1), delta(1), epsilon(1). F(0) has three main subunits: a(1), b(2) and c(10-14). The alpha and beta chains form an alternating ring which encloses part of the gamma chain. F(1) is attached to F(0) by a central stalk formed by the gamma and epsilon chains, while a peripheral stalk is formed by the delta and b chains.

It is found in the cell membrane. In terms of biological role, f(1)F(0) ATP synthase produces ATP from ADP in the presence of a proton or sodium gradient. F-type ATPases consist of two structural domains, F(1) containing the extramembraneous catalytic core and F(0) containing the membrane proton channel, linked together by a central stalk and a peripheral stalk. During catalysis, ATP synthesis in the catalytic domain of F(1) is coupled via a rotary mechanism of the central stalk subunits to proton translocation. Its function is as follows. Key component of the F(0) channel; it plays a direct role in translocation across the membrane. A homomeric c-ring of between 10-14 subunits forms the central stalk rotor element with the F(1) delta and epsilon subunits. In Buchnera aphidicola subsp. Acyrthosiphon pisum (strain 5A), this protein is ATP synthase subunit c.